Reading from the N-terminus, the 146-residue chain is Ribonuclease H (146 aa).

In terms of domain architecture, RNase H type-1 spans 1–136 (MKHIEIYTDG…CDTLAREAAL (136 aa)). Asp-9, Glu-47, Asp-69, and Asp-128 together coordinate Mg(2+).

This sequence belongs to the RNase H family. As to quaternary structure, monomer. Mg(2+) is required as a cofactor.

The protein resides in the cytoplasm. It catalyses the reaction Endonucleolytic cleavage to 5'-phosphomonoester.. Endonuclease that specifically degrades the RNA of RNA-DNA hybrids. In Campylobacter jejuni subsp. jejuni serotype O:23/36 (strain 81-176), this protein is Ribonuclease H.